The primary structure comprises 87 residues: UPF0250 protein BUAPTUC7_482 (87 aa).

The protein belongs to the UPF0250 family.

The sequence is that of UPF0250 protein BUAPTUC7_482 from Buchnera aphidicola subsp. Acyrthosiphon pisum (strain Tuc7).